A 104-amino-acid polypeptide reads, in one-letter code: Flagellar hook-basal body complex protein FliE (104 aa).

This sequence belongs to the FliE family.

It is found in the bacterial flagellum basal body. This is Flagellar hook-basal body complex protein FliE from Escherichia coli (strain 55989 / EAEC).